A 209-amino-acid polypeptide reads, in one-letter code: Protein GrpE (209 aa).

Basic and acidic residues predominate over residues 1-18; sequence MKIFNKDGNKNSKEDTKA. Positions 1–60 are disordered; the sequence is MKIFNKDGNKNSKEDTKAGAENSEAQNSGSSAEEVNKARENPEEASASSEAEKSPEVKCQ. Polar residues predominate over residues 23-33; sequence SEAQNSGSSAE. Over residues 50 to 60 the composition is skewed to basic and acidic residues; it reads EAEKSPEVKCQ.

The protein belongs to the GrpE family. As to quaternary structure, homodimer.

The protein resides in the cytoplasm. Functionally, participates actively in the response to hyperosmotic and heat shock by preventing the aggregation of stress-denatured proteins, in association with DnaK and GrpE. It is the nucleotide exchange factor for DnaK and may function as a thermosensor. Unfolded proteins bind initially to DnaJ; upon interaction with the DnaJ-bound protein, DnaK hydrolyzes its bound ATP, resulting in the formation of a stable complex. GrpE releases ADP from DnaK; ATP binding to DnaK triggers the release of the substrate protein, thus completing the reaction cycle. Several rounds of ATP-dependent interactions between DnaJ, DnaK and GrpE are required for fully efficient folding. This chain is Protein GrpE, found in Methanosarcina barkeri (strain Fusaro / DSM 804).